A 248-amino-acid chain; its full sequence is Sugar fermentation stimulation protein homolog (248 aa).

It belongs to the SfsA family.

The protein is Sugar fermentation stimulation protein homolog of Methylorubrum extorquens (strain PA1) (Methylobacterium extorquens).